The chain runs to 250 residues: NADH-quinone oxidoreductase subunit B 2 (250 aa).

Residues C41, C42, C107, and C137 each coordinate [4Fe-4S] cluster.

It belongs to the complex I 20 kDa subunit family. As to quaternary structure, NDH-1 is composed of 14 different subunits. Subunits NuoB, C, D, E, F, and G constitute the peripheral sector of the complex. [4Fe-4S] cluster serves as cofactor.

The protein localises to the cell membrane. It carries out the reaction a quinone + NADH + 5 H(+)(in) = a quinol + NAD(+) + 4 H(+)(out). Its function is as follows. NDH-1 shuttles electrons from NADH, via FMN and iron-sulfur (Fe-S) centers, to quinones in the respiratory chain. The immediate electron acceptor for the enzyme in this species is believed to be ubiquinone. Couples the redox reaction to proton translocation (for every two electrons transferred, four hydrogen ions are translocated across the cytoplasmic membrane), and thus conserves the redox energy in a proton gradient. This Herpetosiphon aurantiacus (strain ATCC 23779 / DSM 785 / 114-95) protein is NADH-quinone oxidoreductase subunit B 2.